The following is a 209-amino-acid chain: Imidazoleglycerol-phosphate dehydratase (209 aa).

This sequence belongs to the imidazoleglycerol-phosphate dehydratase family.

The protein resides in the cytoplasm. The enzyme catalyses D-erythro-1-(imidazol-4-yl)glycerol 3-phosphate = 3-(imidazol-4-yl)-2-oxopropyl phosphate + H2O. It participates in amino-acid biosynthesis; L-histidine biosynthesis; L-histidine from 5-phospho-alpha-D-ribose 1-diphosphate: step 6/9. This is Imidazoleglycerol-phosphate dehydratase from Paracidovorax citrulli (strain AAC00-1) (Acidovorax citrulli).